Consider the following 942-residue polypeptide: Sucrose synthase 6 (942 aa).

Residues 281-759 (TVFNVVIFSV…GLKRIYECYT (479 aa)) are GT-B glycosyltransferase. Positions 830–862 (TTNLGAGSKQKEVTETEKTKQKSKDGQEQHDVK) are disordered. Over residues 838 to 862 (KQKEVTETEKTKQKSKDGQEQHDVK) the composition is skewed to basic and acidic residues.

Belongs to the glycosyltransferase 1 family. Plant sucrose synthase subfamily. In terms of tissue distribution, detected in the whole plant but more precisely confined to the vasculature in cotyledons, leaves, petals, anthers and roots.

Its subcellular location is the secreted. It is found in the cell wall. It catalyses the reaction an NDP-alpha-D-glucose + D-fructose = a ribonucleoside 5'-diphosphate + sucrose + H(+). Functionally, sucrose-cleaving enzyme that provides UDP-glucose and fructose for various metabolic pathways. Functions in callose synthesis at the site of phloem sieve elements. The protein is Sucrose synthase 6 (SUS6) of Arabidopsis thaliana (Mouse-ear cress).